Consider the following 362-residue polypeptide: Phenylalanine--tRNA ligase alpha subunit (362 aa).

Glutamate 263 contacts Mg(2+).

Belongs to the class-II aminoacyl-tRNA synthetase family. Phe-tRNA synthetase alpha subunit type 1 subfamily. In terms of assembly, tetramer of two alpha and two beta subunits. Requires Mg(2+) as cofactor.

It localises to the cytoplasm. The catalysed reaction is tRNA(Phe) + L-phenylalanine + ATP = L-phenylalanyl-tRNA(Phe) + AMP + diphosphate + H(+). This Caulobacter sp. (strain K31) protein is Phenylalanine--tRNA ligase alpha subunit.